The chain runs to 397 residues: Decapping and exoribonuclease protein (397 aa).

Residues Arg-58, Glu-101, and 131–133 (WRG) each bind substrate. Residue Glu-192 coordinates Mg(2+). Substrate is bound by residues Cys-217 and Glu-234. Mg(2+) is bound by residues Glu-234, Asp-236, Glu-253, and Leu-254. Substrate contacts are provided by Lys-255 and Gln-280. Thr-392 is modified (phosphothreonine). Ser-394 is subject to Phosphoserine.

The protein belongs to the DXO/Dom3Z family. Requires Mg(2+) as cofactor.

It localises to the nucleus. It catalyses the reaction a 5'-end triphospho-ribonucleoside in mRNA + H2O = a 5'-end phospho-ribonucleoside in mRNA + diphosphate + H(+). The catalysed reaction is a 5'-end NAD(+)-phospho-ribonucleoside in mRNA + H2O = a 5'-end phospho-ribonucleoside in mRNA + NAD(+) + H(+). The enzyme catalyses a 5'-end NAD(+)-phospho-ribonucleoside in snoRNA + H2O = a 5'-end phospho-ribonucleoside in snoRNA + NAD(+) + H(+). It carries out the reaction a 5'-end (N(7)-methyl 5'-triphosphoguanosine)-ribonucleoside-ribonucleotide in mRNA + H2O = a (N(7)-methyl 5'-triphosphoguanosine)-nucleoside + a 5'-end phospho-ribonucleoside in mRNA + H(+). It catalyses the reaction a 5'-end FAD-phospho-ribonucleoside in mRNA + H2O = a 5'-end phospho-ribonucleoside in mRNA + FAD + H(+). The catalysed reaction is a 5'-end CoA-ribonucleoside in mRNA + H2O = 3'-dephospho-CoA + a 5'-end phospho-ribonucleoside in mRNA + H(+). Functionally, decapping enzyme for NAD-capped RNAs: specifically hydrolyzes the nicotinamide adenine dinucleotide (NAD) cap from a subset of RNAs by removing the entire NAD moiety from the 5'-end of an NAD-capped RNA. The NAD-cap is present at the 5'-end of some RNAs and snoRNAs. In contrast to the canonical 5'-end N7 methylguanosine (m7G) cap, the NAD cap promotes mRNA decay. Preferentially acts on NAD-capped transcripts in response to environmental stress. Also acts as a non-canonical decapping enzyme that removes the entire cap structure of m7G capped or incompletely capped RNAs and mediates their subsequent degradation. Specifically degrades pre-mRNAs with a defective 5'-end m7G cap and is part of a pre-mRNA capping quality control. Has decapping activity toward incomplete 5'-end m7G cap mRNAs such as unmethylated 5'-end-capped RNA (cap0), while it has no activity toward 2'-O-ribose methylated m7G cap (cap1). In contrast to canonical decapping enzymes DCP2 and NUDT16, which cleave the cap within the triphosphate linkage, the decapping activity releases the entire cap structure GpppN and a 5'-end monophosphate RNA. Also has 5'-3' exoribonuclease activities: The 5'-end monophosphate RNA is then degraded by the 5'-3' exoribonuclease activity, enabling this enzyme to decap and degrade incompletely capped mRNAs. Also possesses RNA 5'-pyrophosphohydrolase activity by hydrolyzing the 5'-end triphosphate to release pyrophosphates. Exhibits decapping activity towards FAD-capped RNAs. Exhibits decapping activity towards dpCoA-capped RNAs in vitro. This Rattus norvegicus (Rat) protein is Decapping and exoribonuclease protein.